The sequence spans 654 residues: Fructose-1,6-bisphosphatase class 3 (654 aa).

A disordered region spans residues 288-307 (NPAFKPKKRPDKHERLTQRE). The span at 298–307 (DKHERLTQRE) shows a compositional bias: basic and acidic residues.

The protein belongs to the FBPase class 3 family. Requires Mn(2+) as cofactor.

It catalyses the reaction beta-D-fructose 1,6-bisphosphate + H2O = beta-D-fructose 6-phosphate + phosphate. The protein operates within carbohydrate biosynthesis; gluconeogenesis. The chain is Fructose-1,6-bisphosphatase class 3 from Staphylococcus aureus (strain MRSA252).